A 949-amino-acid chain; its full sequence is Glycine dehydrogenase (decarboxylating) (949 aa).

Lysine 704 bears the N6-(pyridoxal phosphate)lysine mark.

Belongs to the GcvP family. As to quaternary structure, the glycine cleavage system is composed of four proteins: P, T, L and H. Requires pyridoxal 5'-phosphate as cofactor.

The enzyme catalyses N(6)-[(R)-lipoyl]-L-lysyl-[glycine-cleavage complex H protein] + glycine + H(+) = N(6)-[(R)-S(8)-aminomethyldihydrolipoyl]-L-lysyl-[glycine-cleavage complex H protein] + CO2. Its function is as follows. The glycine cleavage system catalyzes the degradation of glycine. The P protein binds the alpha-amino group of glycine through its pyridoxal phosphate cofactor; CO(2) is released and the remaining methylamine moiety is then transferred to the lipoamide cofactor of the H protein. This is Glycine dehydrogenase (decarboxylating) from Bacteroides thetaiotaomicron (strain ATCC 29148 / DSM 2079 / JCM 5827 / CCUG 10774 / NCTC 10582 / VPI-5482 / E50).